The primary structure comprises 531 residues: Transmembrane protein 266 (531 aa).

Residues 1–102 (MALAASFNMT…VFLLSASLNS (102 aa)) lie on the Cytoplasmic side of the membrane. A helical transmembrane segment spans residues 103–123 (FLVACVILVVILLTLELLIDI). Residues 124–129 (KLLQFS) are Extracellular-facing. A helical transmembrane segment spans residues 130 to 150 (SAFQFAGVIHWISLVILSVFF). The Cytoplasmic segment spans residues 151 to 169 (SETVLRIVVLGIWDYIENK). The chain crosses the membrane as a helical span at residues 170–190 (IEVFDGAVIILSLAPMVASTV). The Extracellular segment spans residues 191-199 (ANGPRSPWD). Residues 200–220 (AISLIIMLRIWRVKRVIDAYV) form a helical membrane-spanning segment. The Cytoplasmic portion of the chain corresponds to 221–531 (LPVKLEMEMV…EQKLHRVPEA (311 aa)). Residues 231–251 (IQQYEKAKVIQDEQLERLTQI) are a coiled coil. A disordered region spans residues 380–477 (NGTGATSESA…PAGSAQTSPE (98 aa)). The segment covering 383–412 (GATSESASRSSVTRAQSDSSQTLGSSTDCS) has biased composition (polar residues). The segment covering 421-431 (EPGPSPLPLPP) has biased composition (pro residues).

As to quaternary structure, homodimer; disulfide-linked.

Its subcellular location is the cell membrane. The protein resides in the cell projection. It localises to the dendrite. The protein localises to the perikaryon. Voltage-sensor protein present on the post-synaptic side of glutamatergic mossy fibers and granule cells in the cerebellum. Despite the presence of a voltage-sensor segment, does not form a functional ion channel and its precise role remains unclear. Undergoes both rapid and slow structural rearrangements in response to changes in voltage. Contains a zinc-binding site that can regulate the slow conformational transition. This chain is Transmembrane protein 266, found in Macaca fascicularis (Crab-eating macaque).